Consider the following 164-residue polypeptide: Lipocalin-like 1 protein (164 aa).

This sequence belongs to the calycin superfamily. Lipocalin family.

The protein is Lipocalin-like 1 protein (LCNL1) of Homo sapiens (Human).